A 213-amino-acid chain; its full sequence is Phosphatidylserine decarboxylase proenzyme (213 aa).

Catalysis depends on S180, which acts as the Schiff-base intermediate with substrate; via pyruvic acid. At S180 the chain carries Pyruvic acid (Ser); by autocatalysis.

This sequence belongs to the phosphatidylserine decarboxylase family. PSD-A subfamily. As to quaternary structure, heterodimer of a large membrane-associated beta subunit and a small pyruvoyl-containing alpha subunit. It depends on pyruvate as a cofactor. In terms of processing, is synthesized initially as an inactive proenzyme. Formation of the active enzyme involves a self-maturation process in which the active site pyruvoyl group is generated from an internal serine residue via an autocatalytic post-translational modification. Two non-identical subunits are generated from the proenzyme in this reaction, and the pyruvate is formed at the N-terminus of the alpha chain, which is derived from the carboxyl end of the proenzyme. The post-translation cleavage follows an unusual pathway, termed non-hydrolytic serinolysis, in which the side chain hydroxyl group of the serine supplies its oxygen atom to form the C-terminus of the beta chain, while the remainder of the serine residue undergoes an oxidative deamination to produce ammonia and the pyruvoyl prosthetic group on the alpha chain.

It localises to the cell membrane. It carries out the reaction a 1,2-diacyl-sn-glycero-3-phospho-L-serine + H(+) = a 1,2-diacyl-sn-glycero-3-phosphoethanolamine + CO2. It participates in phospholipid metabolism; phosphatidylethanolamine biosynthesis; phosphatidylethanolamine from CDP-diacylglycerol: step 2/2. In terms of biological role, catalyzes the formation of phosphatidylethanolamine (PtdEtn) from phosphatidylserine (PtdSer). This chain is Phosphatidylserine decarboxylase proenzyme, found in Carboxydothermus hydrogenoformans (strain ATCC BAA-161 / DSM 6008 / Z-2901).